The following is a 360-amino-acid chain: Peptide chain release factor 1 (360 aa).

Gln235 bears the N5-methylglutamine mark.

Belongs to the prokaryotic/mitochondrial release factor family. In terms of processing, methylated by PrmC. Methylation increases the termination efficiency of RF1.

The protein resides in the cytoplasm. In terms of biological role, peptide chain release factor 1 directs the termination of translation in response to the peptide chain termination codons UAG and UAA. The sequence is that of Peptide chain release factor 1 from Burkholderia pseudomallei (strain 1106a).